Consider the following 251-residue polypeptide: Ubiquinone/menaquinone biosynthesis C-methyltransferase UbiE (251 aa).

S-adenosyl-L-methionine-binding positions include Thr74, Asp95, Asn123–Ala124, and Ser140.

It belongs to the class I-like SAM-binding methyltransferase superfamily. MenG/UbiE family.

It carries out the reaction a 2-demethylmenaquinol + S-adenosyl-L-methionine = a menaquinol + S-adenosyl-L-homocysteine + H(+). The catalysed reaction is a 2-methoxy-6-(all-trans-polyprenyl)benzene-1,4-diol + S-adenosyl-L-methionine = a 5-methoxy-2-methyl-3-(all-trans-polyprenyl)benzene-1,4-diol + S-adenosyl-L-homocysteine + H(+). It functions in the pathway quinol/quinone metabolism; menaquinone biosynthesis; menaquinol from 1,4-dihydroxy-2-naphthoate: step 2/2. The protein operates within cofactor biosynthesis; ubiquinone biosynthesis. Methyltransferase required for the conversion of demethylmenaquinol (DMKH2) to menaquinol (MKH2) and the conversion of 2-polyprenyl-6-methoxy-1,4-benzoquinol (DDMQH2) to 2-polyprenyl-3-methyl-6-methoxy-1,4-benzoquinol (DMQH2). The protein is Ubiquinone/menaquinone biosynthesis C-methyltransferase UbiE of Salmonella arizonae (strain ATCC BAA-731 / CDC346-86 / RSK2980).